The sequence spans 313 residues: Endo-beta-N-acetylglucosaminidase H (313 aa).

The segment at residues 1 to 42 (MFTPVRRRVRTAALALSAAAALVLGSTAASGASATPSPAPAP) is a signal peptide (or 44). A GH18 domain is found at 51–307 (PTSVAYVEVN…SAFTRELYGS (257 aa)). Glutamate 174 functions as the Proton donor in the catalytic mechanism.

Belongs to the glycosyl hydrolase 18 family.

The catalysed reaction is an N(4)-(oligosaccharide-(1-&gt;3)-[oligosaccharide-(1-&gt;6)]-beta-D-Man-(1-&gt;4)-beta-D-GlcNAc-(1-&gt;4)-alpha-D-GlcNAc)-L-asparaginyl-[protein] + H2O = an oligosaccharide-(1-&gt;3)-[oligosaccharide-(1-&gt;6)]-beta-D-Man-(1-&gt;4)-D-GlcNAc + N(4)-(N-acetyl-beta-D-glucosaminyl)-L-asparaginyl-[protein]. Functionally, cleaves asparagine-linked oligomannose and hybrid, but not complex, oligosaccharides from glycoproteins. This is Endo-beta-N-acetylglucosaminidase H from Streptomyces plicatus.